The following is a 90-amino-acid chain: Darcynin 1 (90 aa).

Belongs to the darcynin family.

This chain is Darcynin 1, found in Acinetobacter baumannii (strain ATCC 17978 / DSM 105126 / CIP 53.77 / LMG 1025 / NCDC KC755 / 5377).